The primary structure comprises 456 residues: Aminotransferase ALD1, chloroplastic (456 aa).

The transit peptide at 1–43 (MVSLMFFSSASPLCSSPSKIPKASLDFEMKKLGGSTKLVRNVN) directs the protein to the chloroplast. Pyridoxal 5'-phosphate contacts are provided by residues tyrosine 108, 142–143 (AQ), asparagine 223, aspartate 251, tyrosine 254, serine 281, serine 283, arginine 292, and asparagine 323.

Belongs to the class-I pyridoxal-phosphate-dependent aminotransferase family. LL-diaminopimelate aminotransferase subfamily. Pyridoxal 5'-phosphate serves as cofactor. In terms of tissue distribution, highly expressed in senescing leaves, flowers, siliques and seeds.

Its subcellular location is the plastid. The protein resides in the chloroplast. Aminotransferase involved in local and systemic acquired resistance (SAR) to the bacterial pathogen P.syringae. Required for salicylic acid (SA) and camalexin accumulation upon pathogen infection. Possesses aminotransferase activity in vitro and may generate amino-acid-derived defense signals in vivo. May be involved in ethylene-induced senescence signaling. Involved in the biosynthesis of pipecolate (Pip), a metabolite that orchestrates defense amplification, positive regulation of SA biosynthesis, and priming to guarantee effective local resistance induction and the establishment of SAR. Converts lysine to alpha-keto-epsilon-aminocaproate, which then can spontaneously cyclize to form delta-(1)-piperideine-2-carboxylate (P2C). P2C is converted to Pip by SARD4. May produce non-Pip metabolites that play roles in immunity. Involved in the synthesis of distinct metabolite signals that affect basal and early defenses, and later defense responses. The sequence is that of Aminotransferase ALD1, chloroplastic from Arabidopsis thaliana (Mouse-ear cress).